Reading from the N-terminus, the 128-residue chain is Mite group 2 allergen Gly d 2.01 (128 aa).

Belongs to the NPC2 family.

It localises to the secreted. This Glycyphagus domesticus (House itch mite) protein is Mite group 2 allergen Gly d 2.01.